The primary structure comprises 630 residues: MTGRSTYGMCAVCREPWAEGALELFPCRHVFCTVCVVERWRCPSCQRRIGGRRKANPHLLREIAEVTMELKRYRKGRSGIDVTQMARKLGGGGVTTSSEIFRRLEGSKNGRWKILNLSGCGSELQDLTALRDLEALEDLDLSECANLELRELMVVLTLRNLRKLRMKRTMVNDMWCSSIGLLKFLVHLEVDGSRGVTDITGLCRLKTLEALSLDSCINITKGFDKICALPQLTSLSLCQTNVTDKDLRCIHPDGKLKVLRYSSCHEITDLTAIGGMRSLEKLSLSGCWNVTKGLEELCKFSNLRELDISGCLVLGSAVVLKNLINLKVLSVSNCKNFKDLNGLERLVNLDKLNLSGCHGVSSLGFVANLSNLKELDISGCESLVCFDGLQDLNNLEVLYLRDVKSFTNVGAIKNLSKMRELDLSGCERITSLSGLETLKGLEELSLEGCGEIMSFDPIWSLHHLRVLYVSECGNLEDLSGLEGITGLEELYLHGCRKCTNFGPIWNLRNVCVVELSCCENLEDLSGLQCLTGLEELYLIGCEEITPIGVVGNLRNLKCLSTCWCANLKELGGLDRLVNLEKLDLSGCCGLSSSVFMELMSLPKLQWFYGFGSRVPDIVLEELKRRGVHIF.

The RING-type zinc finger occupies 10–46; that stretch reads CAVCREPWAEGALELFPCRHVFCTVCVVERWRCPSCQ. LRR repeat units follow at residues 184-206, 207-230, 231-251, 255-277, 278-301, 302-324, 325-347, 348-370, 371-393, 394-416, 417-439, 440-462, 463-485, 486-508, 509-531, 532-554, 555-577, and 578-599; these read FLVHLEVDGSRGVTDITGLCRLK, TLEALSLDSCINITKGFDKICALP, QLTSLSLCQTNVTDKDLRCIH, KLKVLRYSSCHEITDLTAIGGMR, SLEKLSLSGCWNVTKGLEELCKFS, NLRELDISGCLVLGSAVVLKNLI, NLKVLSVSNCKNFKDLNGLERLV, NLDKLNLSGCHGVSSLGFVANLS, NLKELDISGCESLVCFDGLQDLN, NLEVLYLRDVKSFTNVGAIKNLS, KMRELDLSGCERITSLSGLETLK, GLEELSLEGCGEIMSFDPIWSLH, HLRVLYVSECGNLEDLSGLEGIT, GLEELYLHGCRKCTNFGPIWNLR, NVCVVELSCCENLEDLSGLQCLT, GLEELYLIGCEEITPIGVVGNLR, NLKCLSTCWCANLKELGGLDRLV, and NLEKLDLSGCCGLSSSVFMELM.

In terms of biological role, may interact with adenylate cyclase to regulate its activity. May be involved in the postranscriptional regulation of genes in VSG expression sites. The chain is Putative adenylate cyclase regulatory protein (ESAG8C) from Trypanosoma equiperdum.